A 783-amino-acid polypeptide reads, in one-letter code: Isoamylase 1, chloroplastic (783 aa).

A chloroplast-targeting transit peptide spans 1–43 (MDAIKCSSSFLHHTKLNTLFSNHTFPKISAPNFKPLFRPISIS). Asp-410 functions as the Nucleophile in the catalytic mechanism. The active-site Proton donor is Glu-466.

This sequence belongs to the glycosyl hydrolase 13 family. As to quaternary structure, associates with ISA2 to form the heteromultimeric complex Iso1 required for amylopectin synthesis.

Its subcellular location is the plastid. The protein resides in the chloroplast. The catalysed reaction is Hydrolysis of (1-&gt;6)-alpha-D-glucosidic branch linkages in glycogen, amylopectin and their beta-limit dextrins.. It participates in glycan biosynthesis; starch biosynthesis. Functionally, involved in the trimming of pre-amylopectin chains. Accelerates the crystallization of nascent amylopectin molecules during starch synthesis. ISA1 and ISA2 work exclusively together as a multimeric holoenzyme. ISA1-ISA2 removes preferentially branches that are very close to other branches. Promotes negative gravitropic responses in shoots by facilitating starch granules (statoliths) formation in hypocotyls. This Arabidopsis thaliana (Mouse-ear cress) protein is Isoamylase 1, chloroplastic.